The following is a 405-amino-acid chain: MDMDPWLLLTLILGLAMAWAIGANDAANSMSTAVGAGAITPKQAVLIAGILEFTGAYFFGKTVTETIRKGIIDPSRISDPNVLVYGSLAALLGATIWLVIATKYGLPVSTTHSIIGGIVGYGVVYAGLEIVNWGKMASVVLSWILSPIVGAIFAFFIFKAIRRTVLESEDPIRSAKRWSPVWIGLAFVVIGTMFYIKVLHGKSLYMGVLKLGIPVGLVVFLITSMILRVKFPKVDPYLGAEFIFRRVQVITSGYVALAHGANDVANAIGPVAAVYTIATMGMAGAKVPVPRWILALGGLGIAIGVATYGYRVMETVGKKITELTNTRGFTIDFSAATVVLIASWLGMPISTTHTVVGAVIGVGLARGVKAINKSIVRDIIISWFVTVPVAGLISAIIFKILWIVG.

11 helical membrane passes run 3–23 (MDPW…AIGA), 44–64 (AVLI…KTVT), 82–102 (VLVY…VIAT), 114–134 (IIGG…VNWG), 138–158 (SVVL…FFIF), 181–201 (VWIG…VLHG), 207–227 (GVLK…SMIL), 264–284 (VANA…GMAG), 287–307 (VPVP…GVAT), 329–349 (FTID…GMPI), and 384–404 (FVTV…LWIV).

This sequence belongs to the inorganic phosphate transporter (PiT) (TC 2.A.20) family.

It localises to the cell membrane. Potential transporter for phosphate. This is Putative phosphate permease PYRAB14010 from Pyrococcus abyssi (strain GE5 / Orsay).